The following is a 210-amino-acid chain: Resolvase (210 aa).

Residues 6 to 150 (VARVYLRVSS…EDRRERQRQG (145 aa)) enclose the Resolvase/invertase-type recombinase catalytic domain. Ser-14 serves as the catalytic O-(5'-phospho-DNA)-serine intermediate. Residues 191 to 210 (GVSVSQVKRVWAQNQTKDKV) constitute a DNA-binding region (H-T-H motif).

The protein belongs to the site-specific recombinase resolvase family.

In terms of biological role, site-specific recombination protein. This Pseudomonas syringae pv. tomato protein is Resolvase (stbA).